A 596-amino-acid chain; its full sequence is Chaperone protein DnaK (596 aa).

Thr180 is modified (phosphothreonine; by autocatalysis).

Belongs to the heat shock protein 70 family.

Its function is as follows. Acts as a chaperone. This chain is Chaperone protein DnaK, found in Thermotoga neapolitana (strain ATCC 49049 / DSM 4359 / NBRC 107923 / NS-E).